Here is a 66-residue protein sequence, read N- to C-terminus: Phylloseptin-H8 (66 aa).

An N-terminal signal peptide occupies residues 1-22 (MAFLKKSLFLVLFLGLVSLSIC). Positions 23-44 (EEEKRETEEEENDQEEDDKSEE) are excised as a propeptide. The tract at residues 25-44 (EKRETEEEENDQEEDDKSEE) is disordered. Residues 30 to 41 (EEEENDQEEDDK) show a composition bias toward acidic residues. A Leucine amide modification is found at Leu65.

As to expression, expressed by the skin glands.

Its subcellular location is the secreted. Functionally, has antimicrobial activity. This Pithecopus hypochondrialis (Orange-legged leaf frog) protein is Phylloseptin-H8.